We begin with the raw amino-acid sequence, 217 residues long: Adenylate kinase (217 aa).

10 to 15 serves as a coordination point for ATP; it reads GAGKGT. An NMP region spans residues 30–59; the sequence is STGDMFRAAMKNETELGLKAKSYMDAGELV. AMP is bound by residues Thr-31, Arg-36, 57–59, 85–88, and Gln-92; these read ELV and GFPR. Residues 126–163 form an LID region; the sequence is GRRVSPTSGRTYHVIFNPPKVEGICDVDGSELIQRDDD. ATP is bound by residues Arg-127 and 136-137; that span reads TY. Residues Arg-160 and Arg-171 each contribute to the AMP site. Gln-199 contacts ATP.

It belongs to the adenylate kinase family. As to quaternary structure, monomer.

The protein resides in the cytoplasm. It carries out the reaction AMP + ATP = 2 ADP. It functions in the pathway purine metabolism; AMP biosynthesis via salvage pathway; AMP from ADP: step 1/1. Functionally, catalyzes the reversible transfer of the terminal phosphate group between ATP and AMP. Plays an important role in cellular energy homeostasis and in adenine nucleotide metabolism. In Halalkalibacterium halodurans (strain ATCC BAA-125 / DSM 18197 / FERM 7344 / JCM 9153 / C-125) (Bacillus halodurans), this protein is Adenylate kinase.